A 784-amino-acid polypeptide reads, in one-letter code: DNA repair and recombination protein RAD54-like (784 aa).

The segment at 1-50 is disordered; that stretch reads MRRSLAPSQRGPLRPESRHSFTPPLLKKNKRSCQQELEREQELDRKRQSA. The tract at residues 2–9 is required for chromatin remodeling, strand pairing activities and coupling of ATPase activity; it reads RRSLAPSQ. Phosphoserine is present on serine 20. Phosphothreonine is present on threonine 22. Basic and acidic residues predominate over residues 36–47; the sequence is ELEREQELDRKR. The Helicase ATP-binding domain maps to 172–346; that stretch reads EGKRGNFNGC…YSLVNFVNPE (175 aa). 185-192 lines the ATP pocket; the sequence is DEMGLGKT. The DEGH box signature appears at 297 to 300; sequence DEGH. The Helicase C-terminal domain maps to 503 to 660; the sequence is LLDFMLAAIR…NNESAEKHFT (158 aa). A compositionally biased stretch (low complexity) spans 747 to 756; that stretch reads VASAEEAASE. Positions 747–784 are disordered; that stretch reads VASAEEAASEQPEEKPDRRKRPSTPLSDDSADEDFLGF. Residues 775–784 are compositionally biased toward acidic residues; the sequence is DSADEDFLGF.

It belongs to the SNF2/RAD54 helicase family. As to quaternary structure, interacts (via N-terminus) with spn-A/Rad51.

It is found in the nucleus. Involved in mitotic DNA repair and meiotic recombination. Functions in the recombinational DNA repair pathway. Essential for interhomolog gene conversion (GC), but may have a less important role in intersister GC than spn-A/Rad51. In the presence of DNA, spn-A/Rad51 enhances the ATPase activity of okr/Rad54. The polypeptide is DNA repair and recombination protein RAD54-like (Drosophila erecta (Fruit fly)).